The sequence spans 181 residues: Bifunctional protein PyrR (181 aa).

Residues 100-112 carry the PRPP-binding motif; sequence VVLVDDVIYTGRT.

The protein belongs to the purine/pyrimidine phosphoribosyltransferase family. PyrR subfamily. Homodimer and homohexamer; in equilibrium.

The catalysed reaction is UMP + diphosphate = 5-phospho-alpha-D-ribose 1-diphosphate + uracil. Regulates transcriptional attenuation of the pyrimidine nucleotide (pyr) operon by binding in a uridine-dependent manner to specific sites on pyr mRNA. This disrupts an antiterminator hairpin in the RNA and favors formation of a downstream transcription terminator, leading to a reduced expression of downstream genes. Its function is as follows. Also displays a weak uracil phosphoribosyltransferase activity which is not physiologically significant. The protein is Bifunctional protein PyrR of Pelotomaculum thermopropionicum (strain DSM 13744 / JCM 10971 / SI).